The primary structure comprises 191 residues: Adenylate kinase (191 aa).

12–17 (GSGKTT) contributes to the ATP binding site. The tract at residues 34 to 63 (STGDLLRAESAKKTERGLLIEKFTSQGELV) is NMP. AMP contacts are provided by residues threonine 35, arginine 40, 61 to 63 (ELV), 88 to 91 (GYPR), and glutamine 95. Positions 130-136 (GRSRGAD) are LID. Arginine 131 provides a ligand contact to ATP. Arginine 133 and arginine 145 together coordinate AMP. Arginine 173 serves as a coordination point for ATP.

Belongs to the adenylate kinase family. In terms of assembly, monomer.

It is found in the cytoplasm. The enzyme catalyses AMP + ATP = 2 ADP. The protein operates within purine metabolism; AMP biosynthesis via salvage pathway; AMP from ADP: step 1/1. Functionally, catalyzes the reversible transfer of the terminal phosphate group between ATP and AMP. Plays an important role in cellular energy homeostasis and in adenine nucleotide metabolism. The sequence is that of Adenylate kinase from Helicobacter pylori (strain G27).